The chain runs to 491 residues: Aspartyl/glutamyl-tRNA(Asn/Gln) amidotransferase subunit B (491 aa).

This sequence belongs to the GatB/GatE family. GatB subfamily. Heterotrimer of A, B and C subunits.

The catalysed reaction is L-glutamyl-tRNA(Gln) + L-glutamine + ATP + H2O = L-glutaminyl-tRNA(Gln) + L-glutamate + ADP + phosphate + H(+). It catalyses the reaction L-aspartyl-tRNA(Asn) + L-glutamine + ATP + H2O = L-asparaginyl-tRNA(Asn) + L-glutamate + ADP + phosphate + 2 H(+). In terms of biological role, allows the formation of correctly charged Asn-tRNA(Asn) or Gln-tRNA(Gln) through the transamidation of misacylated Asp-tRNA(Asn) or Glu-tRNA(Gln) in organisms which lack either or both of asparaginyl-tRNA or glutaminyl-tRNA synthetases. The reaction takes place in the presence of glutamine and ATP through an activated phospho-Asp-tRNA(Asn) or phospho-Glu-tRNA(Gln). This Prochlorococcus marinus (strain NATL1A) protein is Aspartyl/glutamyl-tRNA(Asn/Gln) amidotransferase subunit B.